The following is a 226-amino-acid chain: DNA mismatch repair protein MutH (226 aa).

It belongs to the MutH family.

The protein localises to the cytoplasm. In terms of biological role, sequence-specific endonuclease that cleaves unmethylated GATC sequences. It is involved in DNA mismatch repair. The protein is DNA mismatch repair protein MutH of Actinobacillus pleuropneumoniae serotype 3 (strain JL03).